The following is a 609-amino-acid chain: Glutamine--fructose-6-phosphate aminotransferase [isomerizing] (609 aa).

C2 functions as the Nucleophile; for GATase activity in the catalytic mechanism. One can recognise a Glutamine amidotransferase type-2 domain in the interval 2-218; that stretch reads CGIVGAIAQR…EGDIAEITRR (217 aa). SIS domains follow at residues 286–426 and 458–599; these read ADEL…LKGL and LAED…VDQP. K604 serves as the catalytic For Fru-6P isomerization activity.

In terms of assembly, homodimer. In pull-down experiments interacts with CedA.

It is found in the cytoplasm. It catalyses the reaction D-fructose 6-phosphate + L-glutamine = D-glucosamine 6-phosphate + L-glutamate. Functionally, catalyzes the first step in hexosamine metabolism, converting fructose-6P into glucosamine-6P using glutamine as a nitrogen source. This is Glutamine--fructose-6-phosphate aminotransferase [isomerizing] (glmS) from Escherichia coli (strain K12).